Consider the following 420-residue polypeptide: Putative RNA-binding protein Alsin2 (420 aa).

Residues 99-130 (IADCDRRTDSAKQRLKETQEELTAEVAEKANA) are a coiled coil. Composition is skewed to basic and acidic residues over residues 242 to 259 (AELK…EGRG), 282 to 363 (RERQ…RFGD), and 373 to 399 (HHRD…HFRD). A disordered region spans residues 242 to 420 (AELKRTGKMT…SYSRERNYRR (179 aa)).

Belongs to the Luc7 family. In terms of assembly, interacts with x16 (via Arg/Ser-rich region).

Its function is as follows. May bind to RNA via its Arg/Ser-rich domain. The chain is Putative RNA-binding protein Alsin2 from Drosophila melanogaster (Fruit fly).